The chain runs to 879 residues: Phosphoenolpyruvate carboxylase (879 aa).

Residues His138 and Lys545 contribute to the active site.

The protein belongs to the PEPCase type 1 family. It depends on Mg(2+) as a cofactor.

It catalyses the reaction oxaloacetate + phosphate = phosphoenolpyruvate + hydrogencarbonate. In terms of biological role, forms oxaloacetate, a four-carbon dicarboxylic acid source for the tricarboxylic acid cycle. This Histophilus somni (strain 2336) (Haemophilus somnus) protein is Phosphoenolpyruvate carboxylase.